A 95-amino-acid polypeptide reads, in one-letter code: DNA/RNA-binding protein Alba (95 aa).

K13 bears the N6-acetyllysine mark.

This sequence belongs to the histone-like Alba family. Acetylated. Acetylation at Lys-13 decreases DNA-binding affinity.

It localises to the cytoplasm. It is found in the chromosome. Its function is as follows. Binds double-stranded DNA tightly but without sequence specificity. Involved in DNA compaction. This is DNA/RNA-binding protein Alba from Nitrosopumilus maritimus (strain SCM1).